Consider the following 522-residue polypeptide: Coiled-coil domain-containing protein 149-B (522 aa).

Coiled-coil stretches lie at residues 1–196 (MANQ…LESK) and 260–287 (IRHQ…LEVS). The disordered stretch occupies residues 413-522 (ACTAERSEQH…TSPHQECPSS (110 aa)). Composition is skewed to polar residues over residues 429 to 438 (GGHQSMSTEA), 467 to 490 (QPVT…TAEQ), and 503 to 522 (ASLN…CPSS).

This sequence belongs to the CCDC149 family.

This chain is Coiled-coil domain-containing protein 149-B (ccdc149b), found in Danio rerio (Zebrafish).